The chain runs to 507 residues: ATP synthase subunit alpha (507 aa).

169-176 contacts ATP; the sequence is GDRQIGKT.

The protein belongs to the ATPase alpha/beta chains family. In terms of assembly, F-type ATPases have 2 components, CF(1) - the catalytic core - and CF(0) - the membrane proton channel. CF(1) has five subunits: alpha(3), beta(3), gamma(1), delta(1), epsilon(1). CF(0) has three main subunits: a(1), b(2) and c(9-12). The alpha and beta chains form an alternating ring which encloses part of the gamma chain. CF(1) is attached to CF(0) by a central stalk formed by the gamma and epsilon chains, while a peripheral stalk is formed by the delta and b chains.

Its subcellular location is the cell inner membrane. It catalyses the reaction ATP + H2O + 4 H(+)(in) = ADP + phosphate + 5 H(+)(out). Produces ATP from ADP in the presence of a proton gradient across the membrane. The alpha chain is a regulatory subunit. This chain is ATP synthase subunit alpha, found in Desulfotalea psychrophila (strain LSv54 / DSM 12343).